Consider the following 590-residue polypeptide: J protein JJJ1 (590 aa).

A J domain is found at 3-72; the sequence is TCYYELLGVE…RAWYDSHKEQ (70 aa). A compositionally biased stretch (basic and acidic residues) spans 269 to 284; that stretch reads EQRKLKEQQRKNELNN. Residues 269-293 form a disordered region; the sequence is EQRKLKEQQRKNELNNRRKFGNDNN. The C2H2-type 1 zinc finger occupies 338-362; the sequence is YECFICNKTFKSEKQLKNHINTKLH. S393 carries the phosphoserine modification. Residues 441–546 form a disordered region; the sequence is EVEDVSSDEN…TLPSSMSPTS (106 aa). Residues 455–467 show a composition bias toward basic residues; sequence TKNKKKRKKKKKA. The segment covering 480 to 489 has biased composition (basic and acidic residues); that stretch reads DDTKDKRSNE. T504 carries the post-translational modification Phosphothreonine. The span at 513-527 shows a compositional bias: basic residues; the sequence is KAKKKKGKQPKKNSK. Over residues 528-546 the composition is skewed to low complexity; it reads STKSTPSLSTLPSSMSPTS. The C2H2-type 2 zinc-finger motif lies at 549 to 573; it reads EVCTTCGESFDSRNKLFNHVKIAGH.

It localises to the nucleus. The sequence is that of J protein JJJ1 (JJJ1) from Saccharomyces cerevisiae (strain ATCC 204508 / S288c) (Baker's yeast).